A 126-amino-acid chain; its full sequence is Glycine cleavage system H protein (126 aa).

Residues 22 to 104 (IATVGITAFA…YGRGWLFKVE (83 aa)) form the Lipoyl-binding domain. Lys-63 is modified (N6-lipoyllysine).

The protein belongs to the GcvH family. As to quaternary structure, the glycine cleavage system is composed of four proteins: P, T, L and H. (R)-lipoate serves as cofactor.

Its function is as follows. The glycine cleavage system catalyzes the degradation of glycine. The H protein shuttles the methylamine group of glycine from the P protein to the T protein. This is Glycine cleavage system H protein from Thermobifida fusca (strain YX).